The primary structure comprises 917 residues: Sensor histidine kinase GacS (917 aa).

2 consecutive transmembrane segments (helical) span residues 11 to 31 and 168 to 188; these read VLLLTLLPTSLMALVLGGYFT and SLFASLLLIAAGLAGTALLAV. The HAMP domain maps to 192–244; sequence RTINNPLTQIKQAVAQLKDGNLETRLPPLGSQELDELASGINRMASTLQNAQE. The region spanning 291–512 is the Histidine kinase domain; that stretch reads NMSHEIRTPL…EFWISLNLPK (222 aa). Phosphohistidine; by autocatalysis is present on histidine 294. A Response regulatory domain is found at 668–787; it reads RVLCVDDNPA…QLAQVVLKWT (120 aa). Aspartate 717 carries the post-translational modification 4-aspartylphosphate. The 94-residue stretch at 824–917 folds into the HPt domain; the sequence is KADLAADMLA…RLAAEARTNA (94 aa). Position 863 is a phosphohistidine (histidine 863).

In terms of processing, activation requires a sequential transfer of a phosphate group from a His in the primary transmitter domain, to an Asp in the receiver domain and to a His in the secondary transmitter domain.

It is found in the cell inner membrane. The enzyme catalyses ATP + protein L-histidine = ADP + protein N-phospho-L-histidine.. Member of the two-component regulatory system GacA/GacS which controls the expression of secondary metabolites and extracellular products. Activates GacA by phosphorylation. GacA acts (probably primarily) by activating expression of CsrA1 and CsrA2 antagonist small RNAs (sRNA) RsmX, RsmY and RsmZ which bind to and prevent translation repression by CsrA1 and CsrA2. Involved in the regulation of secondary metabolism and in the synthesis of the antifungal factors cyanide, 2,4-diacetylphloroglucinol and pyoluteorin. Exercises positive post-transcriptional control over the hcnABC and aprA genes; acts upstream of CsrA2 (rsmA). Controls expression of CsrA1 and CsrA2 antagonist sRNAs RsmX, RsmY and probably RsmZ. Probably controls expression of csrA1 (rsmE) and csrA2. In Pseudomonas protegens (strain DSM 19095 / LMG 27888 / CFBP 6595 / CHA0), this protein is Sensor histidine kinase GacS (gacS).